We begin with the raw amino-acid sequence, 462 residues long: UDP-N-acetylmuramoylalanine--D-glutamate ligase (462 aa).

111-117 is an ATP binding site; sequence GTNGKTT.

Belongs to the MurCDEF family.

It is found in the cytoplasm. The enzyme catalyses UDP-N-acetyl-alpha-D-muramoyl-L-alanine + D-glutamate + ATP = UDP-N-acetyl-alpha-D-muramoyl-L-alanyl-D-glutamate + ADP + phosphate + H(+). Its pathway is cell wall biogenesis; peptidoglycan biosynthesis. In terms of biological role, cell wall formation. Catalyzes the addition of glutamate to the nucleotide precursor UDP-N-acetylmuramoyl-L-alanine (UMA). This chain is UDP-N-acetylmuramoylalanine--D-glutamate ligase, found in Trichodesmium erythraeum (strain IMS101).